We begin with the raw amino-acid sequence, 145 residues long: Large ribosomal subunit protein uL15 (145 aa).

The segment at 1-58 is disordered; the sequence is MFNLLKPKGASKRRKIVGRGPGSGLGKTSGRGQKGQKARNTSPRLGFEGGQTPLYRRL. A compositionally biased stretch (gly residues) spans 19-33; that stretch reads RGPGSGLGKTSGRGQ.

It belongs to the universal ribosomal protein uL15 family. As to quaternary structure, part of the 50S ribosomal subunit.

Binds to the 23S rRNA. The sequence is that of Large ribosomal subunit protein uL15 from Borrelia garinii subsp. bavariensis (strain ATCC BAA-2496 / DSM 23469 / PBi) (Borreliella bavariensis).